The sequence spans 336 residues: Nuclear envelope-associated protein 1 (336 aa).

The stretch at 125–261 forms a coiled coil; that stretch reads CSMLKQQLDD…RRTDQDLKKK (137 aa). Positions 240–261 match the Bipartite nuclear localization signal motif; it reads KTKELESQLEKQRRTDQDLKKK. A helical transmembrane segment spans residues 313–330; sequence FWDNSGFKIVVSMSMLML.

In terms of assembly, forms heteromers with NEAP2 and NEAP3. Interacts with SUN1; SUN2 and bZIP18.

It is found in the nucleus inner membrane. It localises to the nucleus. Its subcellular location is the nucleoplasm. This is Nuclear envelope-associated protein 1 from Arabidopsis thaliana (Mouse-ear cress).